The following is a 481-amino-acid chain: Proline--tRNA ligase (481 aa).

Belongs to the class-II aminoacyl-tRNA synthetase family. ProS type 3 subfamily. In terms of assembly, homodimer.

The protein localises to the cytoplasm. It catalyses the reaction tRNA(Pro) + L-proline + ATP = L-prolyl-tRNA(Pro) + AMP + diphosphate. In terms of biological role, catalyzes the attachment of proline to tRNA(Pro) in a two-step reaction: proline is first activated by ATP to form Pro-AMP and then transferred to the acceptor end of tRNA(Pro). The polypeptide is Proline--tRNA ligase (Chlorobium phaeobacteroides (strain DSM 266 / SMG 266 / 2430)).